We begin with the raw amino-acid sequence, 314 residues long: Dihydroorotate dehydrogenase (fumarate) (314 aa).

FMN is bound by residues Ala21 and 45–46 (KS). Substrate contacts are provided by residues Lys45, 69–73 (NSMGL), and Asn129. Asn129 serves as a coordination point for FMN. Cys132 (nucleophile) is an active-site residue. Position 134 (Asn134) interacts with substrate. FMN contacts are provided by Lys166 and Val195. Residue 196–197 (NS) coordinates substrate. FMN-binding positions include Gly224, 251–252 (GG), and 273–274 (GT).

Belongs to the dihydroorotate dehydrogenase family. Type 1 subfamily. Homodimer. FMN is required as a cofactor.

Its subcellular location is the cytoplasm. The enzyme catalyses (S)-dihydroorotate + fumarate = orotate + succinate. It participates in pyrimidine metabolism; UMP biosynthesis via de novo pathway. Its function is as follows. Catalyzes the conversion of dihydroorotate to orotate with fumarate as the electron acceptor. Molecular oxygen can replace fumarate in vitro. The sequence is that of Dihydroorotate dehydrogenase (fumarate) (pyr4) from Trypanosoma cruzi (strain CL Brener).